The sequence spans 341 residues: MVGEMETKEKPKPTPDYLMQLMNDKKLMSSLPNFCGIFNHLERLLDEEISRVRKDMYNDTLNGSTEKRSAELPDAVGPIVQLQEKLYVPVKEYPDFNFVGRILGPRGLTAKQLEAETGCKIMVRGKGSMRDKKKEEQNRGKPNWEHLNEDLHVLITVEDAQNRAEIKLKRAVEEVKKLLVPAAEGEDSLKKMQLMELAILNGTYRDANIKSPALAFSLAATAQAAPRIITGPAPVLPPAALRTPTPAGPTIMPLIRQIQTAVMPNGTPHPTAAIVPPGPEAGLIYTPYEYPYTLAPATSILEYPIEPSGVLGAVATKVRRHDMRVHPYQRIVTADRAATGN.

Residues 11–82 (PKPTPDYLMQ…PDAVGPIVQL (72 aa)) form a qua1 domain; involved in homodimerization region. Residues 87 to 153 (YVPVKEYPDF…WEHLNEDLHV (67 aa)) form the KH domain. Residues 182 to 213 (AAEGEDSLKKMQLMELAILNGTYRDANIKSPA) form a qua2 domain; involved in RNA binding region. S188 bears the Phosphoserine mark. The residue at position 227 (R227) is an Omega-N-methylarginine. Asymmetric dimethylarginine; by CARM1; alternate is present on R242. R242 bears the Omega-N-methylarginine; alternate mark. R256 carries the omega-N-methylarginine modification. The SH3-binding signature appears at 276–279 (PPGP). The short motif at 324-330 (RVHPYQR) is the Nuclear localization signal element.

It belongs to the quaking family. As to quaternary structure, homodimer; does not require RNA to homodimerize. Able to heterodimerize with BICC1. In terms of processing, methylated by PRMT1. Post-translationally, tyrosine phosphorylated at its C-terminus, probably by FYN. Phosphorylation leads to decreased mRNA-binding affinity, affecting transport and/or stabilization of MBP mRNA. Ubiquitinated by RNF6 in macrophages, leading to its degradation.

The protein localises to the nucleus. It is found in the cytoplasm. RNA reader protein, which recognizes and binds specific RNAs, thereby regulating RNA metabolic processes, such as pre-mRNA splicing, circular RNA (circRNA) formation, mRNA export, mRNA stability and/or translation. Involved in various cellular processes, such as mRNA storage into stress granules, apoptosis, lipid deposition, interferon response, glial cell fate and development. Binds to the 5'-NACUAAY-N(1,20)-UAAY-3' RNA core sequence. Acts as a mRNA modification reader that specifically recognizes and binds mRNA transcripts modified by internal N(7)-methylguanine (m7G). Promotes the formation of circular RNAs (circRNAs) during the epithelial to mesenchymal transition and in cardiomyocytes: acts by binding to sites flanking circRNA-forming exons. CircRNAs are produced by back-splicing circularization of pre-mRNAs. Plays a central role in myelinization via 3 distinct mechanisms. First, acts by protecting and promoting stability of target mRNAs such as MBP, SIRT2 and CDKN1B, which promotes oligodendrocyte differentiation. Second, participates in mRNA transport by regulating the nuclear export of MBP mRNA. Finally, indirectly regulates mRNA splicing of MAG pre-mRNA during oligodendrocyte differentiation by acting as a negative regulator of MAG exon 12 alternative splicing: acts by binding to HNRNPA1 mRNA splicing factor, preventing its translation. Involved in microglia differentiation and remyelination by regulating microexon alternative splicing of the Rho GTPase pathway. Involved in macrophage differentiation: promotes monocyte differentiation by regulating pre-mRNA splicing in naive peripheral blood monocytes. Acts as an important regulator of muscle development: required for the contractile function of cardiomyocytes by regulating alternative splicing of cardiomyocyte transcripts. Acts as a negative regulator of thermogenesis by decreasing stability, nuclear export and translation of mRNAs encoding PPARGC1A and UCP1. Also required for visceral endoderm function and blood vessel development. May also play a role in smooth muscle development. In addition to its RNA-binding activity, also acts as a nuclear transcription coactivator for SREBF2/SREBP2. The chain is KH domain-containing RNA-binding protein QKI from Bos taurus (Bovine).